The sequence spans 107 residues: Iron-binding protein IscA (107 aa).

Fe cation contacts are provided by C35, C99, and C101.

It belongs to the HesB/IscA family. As to quaternary structure, homodimer; may form tetramers and higher multimers. Fe cation serves as cofactor.

In terms of biological role, is able to transfer iron-sulfur clusters to apo-ferredoxin. Multiple cycles of [2Fe2S] cluster formation and transfer are observed, suggesting that IscA acts catalytically. Recruits intracellular free iron so as to provide iron for the assembly of transient iron-sulfur cluster in IscU in the presence of IscS, L-cysteine and the thioredoxin reductase system TrxA/TrxB. The chain is Iron-binding protein IscA from Photorhabdus laumondii subsp. laumondii (strain DSM 15139 / CIP 105565 / TT01) (Photorhabdus luminescens subsp. laumondii).